Here is a 132-residue protein sequence, read N- to C-terminus: Large ribosomal subunit protein bL12 (132 aa).

The protein belongs to the bacterial ribosomal protein bL12 family. In terms of assembly, homodimer. Part of the ribosomal stalk of the 50S ribosomal subunit. Forms a multimeric L10(L12)X complex, where L10 forms an elongated spine to which 2 to 4 L12 dimers bind in a sequential fashion. Binds GTP-bound translation factors.

Forms part of the ribosomal stalk which helps the ribosome interact with GTP-bound translation factors. Is thus essential for accurate translation. The protein is Large ribosomal subunit protein bL12 of Prochlorococcus marinus (strain MIT 9211).